A 334-amino-acid chain; its full sequence is L-lactate dehydrogenase C chain (334 aa).

NAD(+)-binding positions include 30–58 (GQVGMACAVSVLLKELADELALVDILEDK), R100, and N139. Substrate is bound by residues N139 and R170. The active-site Proton acceptor is H194. T249 contributes to the substrate binding site.

Belongs to the LDH/MDH superfamily. LDH family. In terms of assembly, homotetramer.

It localises to the cytoplasm. It carries out the reaction (S)-lactate + NAD(+) = pyruvate + NADH + H(+). Its pathway is fermentation; pyruvate fermentation to lactate; (S)-lactate from pyruvate: step 1/1. This is L-lactate dehydrogenase C chain (ldhc) from Xenopus laevis (African clawed frog).